The sequence spans 381 residues: MTLRYLTAGESHGPALVAIAEGFPAGLAVDFEAVDRDLRRRQKGYGRGGRMKIETDAAQFLAGLRGGLTTGAPIALAVWNKDHENWKDLVSPYARGGKKFTQVRPGHADLAGALKYGLDDARDVLERASARSTAVTVALGALAKALLSTLGVEVCSRVVAIGPREIRPDAPPTPAQRDAIEASDLHVDDEALAAEWRALIDAEKARGGSIGGAFDVYATGLPIGVGSHVHPDRRLDARLAGALCGVQAIRAVEIGDGTQVGRPGYEFHDAIHHDPARGFWRDTNRAGGLEGGMTDGMPLRVRAYMKPIPTMLHPLATVDLATRAATQARYERSDVCAVPAAAVVGEAVVAWELANALLEKFGGDAVEDVRRAVEAYAARIR.

NADP(+) is bound by residues Arg41 and Arg47. FMN is bound by residues 127 to 129, 247 to 248, Gly291, 306 to 310, and Arg332; these read RAS, QA, and KPIPT.

It belongs to the chorismate synthase family. In terms of assembly, homotetramer. Requires FMNH2 as cofactor.

The catalysed reaction is 5-O-(1-carboxyvinyl)-3-phosphoshikimate = chorismate + phosphate. The protein operates within metabolic intermediate biosynthesis; chorismate biosynthesis; chorismate from D-erythrose 4-phosphate and phosphoenolpyruvate: step 7/7. Functionally, catalyzes the anti-1,4-elimination of the C-3 phosphate and the C-6 proR hydrogen from 5-enolpyruvylshikimate-3-phosphate (EPSP) to yield chorismate, which is the branch point compound that serves as the starting substrate for the three terminal pathways of aromatic amino acid biosynthesis. This reaction introduces a second double bond into the aromatic ring system. The chain is Chorismate synthase from Anaeromyxobacter dehalogenans (strain 2CP-1 / ATCC BAA-258).